A 242-amino-acid chain; its full sequence is Dehydration-responsive element-binding protein 1J (242 aa).

A compositionally biased stretch (low complexity) spans 20–29; sequence SSATTAATAT. A disordered region spans residues 20–44; it reads SSATTAATATGPASPKRPAGRTKFQ. The AP2/ERF DNA-binding region spans 50-109; the sequence is VFRGVRRRGRAGRWVCEVRVPGSRGDRLWVGTFDTAEEAARAHDAAMLAMCGASASLNFT. Residues 143-184 are disordered; that stretch reads FQRRGSTAATATATSGDAASTAPPSSSPVLSPNDDNASSAST. Residues 148–184 are compositionally biased toward low complexity; sequence STAATATATSGDAASTAPPSSSPVLSPNDDNASSAST.

It belongs to the AP2/ERF transcription factor family. ERF subfamily.

The protein localises to the nucleus. Transcriptional activator that binds specifically to the DNA sequence 5'-[AG]CCGAC-3'. Binding to the C-repeat/DRE element mediates high salinity- and dehydration-inducible transcription. The protein is Dehydration-responsive element-binding protein 1J (DREB1J) of Oryza sativa subsp. indica (Rice).